A 457-amino-acid chain; its full sequence is Bifunctional protein GlmU (457 aa).

Residues 1-229 (MYNCAIILAA…YEEIMGVNSR (229 aa)) are pyrophosphorylase. Residues 8–11 (LAAG), Lys22, Gln73, and 78–79 (GT) contribute to the UDP-N-acetyl-alpha-D-glucosamine site. Position 103 (Asp103) interacts with Mg(2+). Residues Gly140, Glu155, Asn170, and Asn227 each contribute to the UDP-N-acetyl-alpha-D-glucosamine site. Asn227 is a Mg(2+) binding site. The interval 230 to 250 (VQLSEAEIVMRKRINHKHMVN) is linker. The segment at 251 to 457 (GVTFIDCEST…WLDKKGLLKK (207 aa)) is N-acetyltransferase. Residues Arg332 and Lys350 each contribute to the UDP-N-acetyl-alpha-D-glucosamine site. His362 functions as the Proton acceptor in the catalytic mechanism. 2 residues coordinate UDP-N-acetyl-alpha-D-glucosamine: Tyr365 and Asn376. Residues 385–386 (NY), Ala422, and Arg439 each bind acetyl-CoA.

It in the N-terminal section; belongs to the N-acetylglucosamine-1-phosphate uridyltransferase family. In the C-terminal section; belongs to the transferase hexapeptide repeat family. Homotrimer. The cofactor is Mg(2+).

The protein localises to the cytoplasm. It carries out the reaction alpha-D-glucosamine 1-phosphate + acetyl-CoA = N-acetyl-alpha-D-glucosamine 1-phosphate + CoA + H(+). The enzyme catalyses N-acetyl-alpha-D-glucosamine 1-phosphate + UTP + H(+) = UDP-N-acetyl-alpha-D-glucosamine + diphosphate. Its pathway is nucleotide-sugar biosynthesis; UDP-N-acetyl-alpha-D-glucosamine biosynthesis; N-acetyl-alpha-D-glucosamine 1-phosphate from alpha-D-glucosamine 6-phosphate (route II): step 2/2. The protein operates within nucleotide-sugar biosynthesis; UDP-N-acetyl-alpha-D-glucosamine biosynthesis; UDP-N-acetyl-alpha-D-glucosamine from N-acetyl-alpha-D-glucosamine 1-phosphate: step 1/1. It functions in the pathway bacterial outer membrane biogenesis; LPS lipid A biosynthesis. Functionally, catalyzes the last two sequential reactions in the de novo biosynthetic pathway for UDP-N-acetylglucosamine (UDP-GlcNAc). The C-terminal domain catalyzes the transfer of acetyl group from acetyl coenzyme A to glucosamine-1-phosphate (GlcN-1-P) to produce N-acetylglucosamine-1-phosphate (GlcNAc-1-P), which is converted into UDP-GlcNAc by the transfer of uridine 5-monophosphate (from uridine 5-triphosphate), a reaction catalyzed by the N-terminal domain. This chain is Bifunctional protein GlmU, found in Clostridium botulinum (strain ATCC 19397 / Type A).